The sequence spans 174 residues: uncharacterized protein (174 aa).

It belongs to the NAD(P)H dehydrogenase (quinone) family.

This is an uncharacterized protein from Bacillus subtilis (strain 168).